We begin with the raw amino-acid sequence, 197 residues long: CASP-like protein 1B2 (197 aa).

An N-acetylalanine modification is found at A2. Over 2-17 (AREKIVVAGGSTKSWK) the chain is Cytoplasmic. A helical membrane pass occupies residues 18 to 38 (LLLGLRVFAFMATLAAAIVMS). The Extracellular portion of the chain corresponds to 39–69 (LNKETKTLVVATIGTLPIKATLTAKFQDTPA). A helical transmembrane segment spans residues 70–90 (FVFFVIANVMVSFHNLLMIVL). Residues 91-106 (QIFSRKLEYKGVRLLS) lie on the Cytoplasmic side of the membrane. Residues 107–127 (IAILDMLNATLVSAAANAAVF) traverse the membrane as a helical segment. Topologically, residues 128-156 (VAELGKNGNKHAKWNKVCDRFATYCDHGA) are extracellular. Residues 157-177 (GALIAAFAGVILMLLVSSVSI) form a helical membrane-spanning segment. Residues 178–197 (SRLLINSKHLSTTATTTAVV) lie on the Cytoplasmic side of the membrane.

It belongs to the Casparian strip membrane proteins (CASP) family. As to quaternary structure, homodimer and heterodimers.

It is found in the cell membrane. In Arabidopsis lyrata subsp. lyrata (Lyre-leaved rock-cress), this protein is CASP-like protein 1B2.